Here is a 306-residue protein sequence, read N- to C-terminus: Mitochondrial substrate carrier family protein ucpA (306 aa).

Over 1-15 the chain is Mitochondrial intermembrane; it reads MSVNLNNNKNNKNKV. Solcar repeat units lie at residues 13 to 103, 112 to 204, and 211 to 301; these read NKVA…ISNA, YFFL…CKNL, and DGIY…FKKL. The chain crosses the membrane as a helical span at residues 16–36; it reads AIGFISGSLASICATTVTNPI. Residues 37 to 83 are Mitochondrial matrix-facing; that stretch reads ELVKTRLQLQGELQLSQRIYNGVWDAFKQIYKTEGIRGLQSGLIPAY. A helical membrane pass occupies residues 84–103; that stretch reads FSQATMQGIRLGSFDLISNA. Residues 104–117 lie on the Mitochondrial intermembrane side of the membrane; the sequence is LGAKPNQDYFFLKN. Residues 118-138 form a helical membrane-spanning segment; it reads LLAGATAGAIGAAAGSPFDLV. At 139-174 the chain is on the mitochondrial matrix side; sequence KVRMQAANMYKNDPQFVGYSSSFAAFKQIIQKEGFK. The helical transmembrane segment at 175-195 threads the bilayer; it reads GLTRGMLTSAQRTAVGSAIQL. Over 196 to 211 the chain is Mitochondrial intermembrane; sequence STYGSCKNLVLNFVDD. Residues 212-232 traverse the membrane as a helical segment; that stretch reads GIYAYIISSMVAGFIVTFGMN. Residues 233–276 are Mitochondrial matrix-facing; that stretch reads PFDVARTRLYFQGKGNSHGEIYKGLMDCVYKTVKKEGFGAVYKG. Residues 277–295 form a helical membrane-spanning segment; sequence FWAHYLRLGPHTILTLVFW. Residues 296-306 lie on the Mitochondrial intermembrane side of the membrane; the sequence is EQFKKLFSGEL.

Belongs to the mitochondrial carrier (TC 2.A.29) family.

It is found in the mitochondrion inner membrane. In terms of biological role, mitochondrial solute carriers shuttle metabolites, nucleotides, and cofactors through the mitochondrial inner membrane. Transports oxaloacetate and sulfate. The chain is Mitochondrial substrate carrier family protein ucpA (ucpA) from Dictyostelium discoideum (Social amoeba).